The sequence spans 263 residues: Purine nucleoside phosphorylase SAR1163 (263 aa).

Zn(2+) is bound by residues histidine 79, cysteine 124, and histidine 141.

It belongs to the purine nucleoside phosphorylase YfiH/LACC1 family. As to quaternary structure, homodimer. Cu(2+) serves as cofactor. Requires Zn(2+) as cofactor.

The enzyme catalyses adenosine + phosphate = alpha-D-ribose 1-phosphate + adenine. It catalyses the reaction S-methyl-5'-thioadenosine + phosphate = 5-(methylsulfanyl)-alpha-D-ribose 1-phosphate + adenine. The catalysed reaction is inosine + phosphate = alpha-D-ribose 1-phosphate + hypoxanthine. It carries out the reaction adenosine + H2O + H(+) = inosine + NH4(+). Functionally, purine nucleoside enzyme that catalyzes the phosphorolysis of adenosine and inosine nucleosides, yielding D-ribose 1-phosphate and the respective free bases, adenine and hypoxanthine. Also catalyzes the phosphorolysis of S-methyl-5'-thioadenosine into adenine and S-methyl-5-thio-alpha-D-ribose 1-phosphate. Also has adenosine deaminase activity. The chain is Purine nucleoside phosphorylase SAR1163 from Staphylococcus aureus (strain MRSA252).